The following is a 181-amino-acid chain: Large ribosomal subunit protein bL17 (181 aa).

Residues 141–159 (KAASATAESAPVATANDAA) show a composition bias toward low complexity. The tract at residues 141–181 (KAASATAESAPVATANDAAPAEEAEVQGVKDPAEDCEAKAD) is disordered. The segment covering 171 to 181 (DPAEDCEAKAD) has biased composition (basic and acidic residues).

It belongs to the bacterial ribosomal protein bL17 family. As to quaternary structure, part of the 50S ribosomal subunit. Contacts protein L32.

The protein is Large ribosomal subunit protein bL17 of Geotalea daltonii (strain DSM 22248 / JCM 15807 / FRC-32) (Geobacter daltonii).